Here is a 287-residue protein sequence, read N- to C-terminus: Oxaloacetate decarboxylase (287 aa).

Ser50 provides a ligand contact to substrate. Residue Asp88 coordinates Mg(2+). Substrate-binding residues include Arg159 and His235.

It belongs to the isocitrate lyase/PEP mutase superfamily. Oxaloacetate decarboxylase family. As to quaternary structure, homotetramer; dimer of dimers. Requires Mg(2+) as cofactor.

It catalyses the reaction oxaloacetate + H(+) = pyruvate + CO2. Catalyzes the decarboxylation of oxaloacetate into pyruvate. Seems to play a role in maintaining cellular concentrations of bicarbonate and pyruvate. In Chromohalobacter salexigens (strain ATCC BAA-138 / DSM 3043 / CIP 106854 / NCIMB 13768 / 1H11), this protein is Oxaloacetate decarboxylase.